Reading from the N-terminus, the 502-residue chain is ATP synthase subunit alpha (502 aa).

An ATP-binding site is contributed by 169–176 (GDRQTGKT).

Belongs to the ATPase alpha/beta chains family. As to quaternary structure, F-type ATPases have 2 components, CF(1) - the catalytic core - and CF(0) - the membrane proton channel. CF(1) has five subunits: alpha(3), beta(3), gamma(1), delta(1), epsilon(1). CF(0) has three main subunits: a(1), b(2) and c(9-12). The alpha and beta chains form an alternating ring which encloses part of the gamma chain. CF(1) is attached to CF(0) by a central stalk formed by the gamma and epsilon chains, while a peripheral stalk is formed by the delta and b chains.

It is found in the cell membrane. The catalysed reaction is ATP + H2O + 4 H(+)(in) = ADP + phosphate + 5 H(+)(out). In terms of biological role, produces ATP from ADP in the presence of a proton gradient across the membrane. The alpha chain is a regulatory subunit. This Staphylococcus aureus (strain COL) protein is ATP synthase subunit alpha.